The chain runs to 669 residues: Leucine zipper putative tumor suppressor 2 (669 aa).

Low complexity predominate over residues 1 to 25 (MAIVQTLPVPLEPAPEAATAPQAPV). Disordered regions lie at residues 1-56 (MAIV…PTFF), 92-131 (NEDF…IPVS), 150-201 (PVLP…AADK), and 215-323 (GTLS…SDEA). The required for centrosomal localization stretch occupies residues 1 to 332 (MAIVQTLPVP…ALLHCVLEGK (332 aa)). Polar residues predominate over residues 172-181 (LSGSQGSLTQ). The span at 187-199 (ASSSSSSSSSSAA) shows a compositional bias: low complexity. Over residues 215–233 (GTLSDSGRNSLSSLPTYST) the composition is skewed to polar residues. 2 stretches are compositionally biased toward low complexity: residues 241 to 251 (SSPGGHLPSHG) and 267 to 283 (GPSH…KSTG). Ser249 is subject to Phosphoserine. A compositionally biased stretch (gly residues) spans 284 to 295 (SLGGRVAGGLLG). Ser296 carries the phosphoserine modification. Residues 298–308 (TRASPDSSSCG) are compositionally biased toward polar residues. Residues 311-320 (SPPPPPPPPS) are compositionally biased toward pro residues. The stretch at 328–649 (VLEGKLRDRE…LELEARELAD (322 aa)) forms a coiled coil. Residues 447–669 (SGEISLLKQQ…CLEEITATEI (223 aa)) are sufficient for interaction with CTNNB1. The segment at 450–669 (ISLLKQQLKE…CLEEITATEI (220 aa)) is sufficient for interaction with KATNB1 and for inhibition of katanin-mediated microtubule severing. At Ser570 the chain carries Phosphoserine. The Nuclear export signal motif lies at 631-640 (LEQELQQLSL).

It belongs to the LZTS2 family. In terms of assembly, interacts with KATNB1. Also interacts with CTNNB1, gamma-tubulin and KIF23. In terms of tissue distribution, highly expressed in prostate and testis, and at slightly lower levels in spleen, thymus, uterus, small intestine and colon.

Its subcellular location is the cytoplasm. The protein resides in the cytoskeleton. The protein localises to the microtubule organizing center. It is found in the centrosome. In terms of biological role, negative regulator of katanin-mediated microtubule severing and release from the centrosome. Required for central spindle formation and the completion of cytokinesis. May negatively regulate axonal outgrowth by preventing the formation of microtubule bundles that are necessary for transport within the elongating axon. Negative regulator of the Wnt signaling pathway. Represses beta-catenin-mediated transcriptional activation by promoting the nuclear exclusion of beta-catenin. The chain is Leucine zipper putative tumor suppressor 2 from Homo sapiens (Human).